A 48-amino-acid chain; its full sequence is Light-harvesting polypeptide B-885 beta-1 chain (48 aa).

Residues 1 to 20 (AEDRKSLSGLTEQEAQEFGT) are Cytoplasmic-facing. Residues 21-43 (LYTQGVAFVAVIAVVAHALVWAW) form a helical membrane-spanning segment. His-37 provides a ligand contact to a bacteriochlorophyll. Residues 44–48 (RPWLQ) are Periplasmic-facing.

The protein belongs to the antenna complex beta subunit family. In terms of assembly, the core complex is formed by different alpha and beta chains, binding bacteriochlorophyll molecules, and arranged most probably in tetrameric structures disposed around the reaction center. The non-pigmented gamma chains may constitute additional components.

It is found in the cell inner membrane. Functionally, antenna complexes are light-harvesting systems, which transfer the excitation energy to the reaction centers. In Rhodocyclus tenuis (Rhodospirillum tenue), this protein is Light-harvesting polypeptide B-885 beta-1 chain.